The sequence spans 347 residues: UDP-3-O-acylglucosamine N-acyltransferase (347 aa).

His-241 functions as the Proton acceptor in the catalytic mechanism.

It belongs to the transferase hexapeptide repeat family. LpxD subfamily. Homotrimer.

It catalyses the reaction a UDP-3-O-[(3R)-3-hydroxyacyl]-alpha-D-glucosamine + a (3R)-hydroxyacyl-[ACP] = a UDP-2-N,3-O-bis[(3R)-3-hydroxyacyl]-alpha-D-glucosamine + holo-[ACP] + H(+). Its pathway is bacterial outer membrane biogenesis; LPS lipid A biosynthesis. In terms of biological role, catalyzes the N-acylation of UDP-3-O-acylglucosamine using 3-hydroxyacyl-ACP as the acyl donor. Is involved in the biosynthesis of lipid A, a phosphorylated glycolipid that anchors the lipopolysaccharide to the outer membrane of the cell. The sequence is that of UDP-3-O-acylglucosamine N-acyltransferase from Neisseria meningitidis serogroup A / serotype 4A (strain DSM 15465 / Z2491).